The chain runs to 366 residues: GTP cyclohydrolase 1 type 2 homolog (366 aa).

A divalent metal cation contacts are provided by His64, His65, Asp102, His326, and Glu329.

Belongs to the GTP cyclohydrolase I type 2/NIF3 family. In terms of assembly, homohexamer.

In Staphylococcus epidermidis (strain ATCC 12228 / FDA PCI 1200), this protein is GTP cyclohydrolase 1 type 2 homolog.